Here is a 360-residue protein sequence, read N- to C-terminus: DNA polymerase IV (360 aa).

Residues 9 to 191 form the UmuC domain; the sequence is IMHLDIDAFY…LNINKIPYIG (183 aa). Mg(2+) is bound by residues aspartate 13 and aspartate 108. Glutamate 109 is a catalytic residue.

This sequence belongs to the DNA polymerase type-Y family. As to quaternary structure, monomer. The cofactor is Mg(2+).

It is found in the cytoplasm. It catalyses the reaction DNA(n) + a 2'-deoxyribonucleoside 5'-triphosphate = DNA(n+1) + diphosphate. Functionally, poorly processive, error-prone DNA polymerase involved in untargeted mutagenesis. Copies undamaged DNA at stalled replication forks, which arise in vivo from mismatched or misaligned primer ends. These misaligned primers can be extended by PolIV. Exhibits no 3'-5' exonuclease (proofreading) activity. May be involved in translesional synthesis, in conjunction with the beta clamp from PolIII. This Ureaplasma parvum serovar 3 (strain ATCC 27815 / 27 / NCTC 11736) protein is DNA polymerase IV.